The following is a 245-amino-acid chain: Cytochrome P450 CYP82H23 (245 aa).

This sequence belongs to the cytochrome P450 family. It depends on heme as a cofactor.

Probable heme-thiolate monooxygenase. The chain is Cytochrome P450 CYP82H23 from Panax ginseng (Korean ginseng).